Here is a 149-residue protein sequence, read N- to C-terminus: Pleckstrin homology domain-containing family J member 1 (149 aa).

The 94-residue stretch at 15–108 folds into the PH domain; it reads PAEMAAELGM…WMAALRQASY (94 aa).

The protein is Pleckstrin homology domain-containing family J member 1 (PLEKHJ1) of Bos taurus (Bovine).